The following is a 443-amino-acid chain: Xaa-Pro dipeptidase (443 aa).

The Mn(2+) site is built by Asp-246, Asp-257, His-339, Glu-384, and Glu-423.

The protein belongs to the peptidase M24B family. Bacterial-type prolidase subfamily. Mn(2+) is required as a cofactor.

The enzyme catalyses Xaa-L-Pro dipeptide + H2O = an L-alpha-amino acid + L-proline. Splits dipeptides with a prolyl residue in the C-terminal position. This is Xaa-Pro dipeptidase from Klebsiella pneumoniae subsp. pneumoniae (strain ATCC 700721 / MGH 78578).